A 125-amino-acid polypeptide reads, in one-letter code: MRIAGVNLPLNKHAVIALTHVYGIGRASAESILQRAGIAPNRKISELNDEEAHAIREIIAEQYKVEGQARGEQQTAIKRLMDIGCYRGLRHRRSLPVRGQRTRTNARTRKGKRKTVAGKKKAVKK.

Residues 92–125 form a disordered region; sequence RRSLPVRGQRTRTNARTRKGKRKTVAGKKKAVKK.

Belongs to the universal ribosomal protein uS13 family. Part of the 30S ribosomal subunit. Forms a loose heterodimer with protein S19. Forms two bridges to the 50S subunit in the 70S ribosome.

Functionally, located at the top of the head of the 30S subunit, it contacts several helices of the 16S rRNA. In the 70S ribosome it contacts the 23S rRNA (bridge B1a) and protein L5 of the 50S subunit (bridge B1b), connecting the 2 subunits; these bridges are implicated in subunit movement. Contacts the tRNAs in the A and P-sites. The chain is Small ribosomal subunit protein uS13 from Pelodictyon phaeoclathratiforme (strain DSM 5477 / BU-1).